Here is a 600-residue protein sequence, read N- to C-terminus: Mitoguardin 1 (600 aa).

2 consecutive transmembrane segments (helical) span residues 15–32 (TYAVRVFALPVSWYYSLS) and 38–58 (PVAKKLFMVTAVSAVSVIFLA). A phosphoserine mark is found at Ser257 and Ser261.

The protein belongs to the mitoguardin family. As to quaternary structure, homodimer and heterodimer; forms heterodimers with MIGA2. Interacts with PLD6/MitoPLD.

It is found in the mitochondrion outer membrane. Its function is as follows. Regulator of mitochondrial fusion. Acts by forming homo- and heterodimers at the mitochondrial outer membrane and facilitating the formation of PLD6/MitoPLD dimers. May act by regulating phospholipid metabolism via PLD6/MitoPLD. This Mus musculus (Mouse) protein is Mitoguardin 1.